The primary structure comprises 506 residues: GMP synthase [glutamine-hydrolyzing] (506 aa).

A Glutamine amidotransferase type-1 domain is found at 4–192 (KLIILDFGSQ…FLDICGMKRD (189 aa)). Residue Cys79 is the Nucleophile of the active site. Residues His167 and Glu169 contribute to the active site. Residues 193–381 (WTPASFIEAT…LGMMPHLIHR (189 aa)) form the GMPS ATP-PPase domain. ATP is bound at residue 220–226 (SGGVDSS).

Homodimer.

It catalyses the reaction XMP + L-glutamine + ATP + H2O = GMP + L-glutamate + AMP + diphosphate + 2 H(+). The protein operates within purine metabolism; GMP biosynthesis; GMP from XMP (L-Gln route): step 1/1. Catalyzes the synthesis of GMP from XMP. In Porphyromonas gingivalis (strain ATCC BAA-308 / W83), this protein is GMP synthase [glutamine-hydrolyzing].